The following is an 895-amino-acid chain: Plasma membrane ATPase 1 (895 aa).

Residues 1 to 53 (MSATEPTNEKVDKIVSDDEDEDIDQLVADLQSNPGAGDEEEEEENDSSFKAVP) are disordered. Residues 1–92 (MSATEPTNEK…AEEQENLVLK (92 aa)) lie on the Cytoplasmic side of the membrane. The span at 7–16 (TNEKVDKIVS) shows a compositional bias: basic and acidic residues. A compositionally biased stretch (acidic residues) spans 37 to 46 (GDEEEEEEND). Residues 93–113 (FVMFFVGPIQFVMEAAAVLAA) form a helical membrane-spanning segment. The Extracellular segment spans residues 114-117 (GLED). The chain crosses the membrane as a helical span at residues 118–137 (WVDFGVICALLLLNAFVGFI). Residues 138-268 (QEYQAGSIVD…GTGHFTEVLN (131 aa)) lie on the Cytoplasmic side of the membrane. The chain crosses the membrane as a helical span at residues 269 to 290 (GIGTTLLVFVIVTLLVVWVACF). Topologically, residues 291–301 (YRTVRIVPILR) are extracellular. Residues 302 to 324 (YTLAITIIGVPVGLPAVVTTTMA) form a helical membrane-spanning segment. The Cytoplasmic portion of the chain corresponds to 325–696 (VGAAYLAKKQ…IAILNRSLDI (372 aa)). Catalysis depends on Asp355, which acts as the 4-aspartylphosphate intermediate. Residues Asp611 and Asp615 each contribute to the Mg(2+) site. Residues 697-715 (NLIVFIAIFADVATLAIAY) form a helical membrane-spanning segment. The Extracellular segment spans residues 716–731 (DNAPYDPKPVKWNLPR). The chain crosses the membrane as a helical span at residues 732 to 751 (LWGMSIVLGIILAIGTWITL). The Cytoplasmic portion of the chain corresponds to 752 to 801 (TTMLLPKGGIIQNFGGLDGILFLQISLTENWLIFVTRAQGPFWSSIPSWQ). The chain crosses the membrane as a helical span at residues 802-822 (LSGAVLIVDIIATCFTLFGWW). At 823–834 (SQNWTDIVTVVR) the chain is on the extracellular side. The chain crosses the membrane as a helical span at residues 835–851 (TWIWSFGVFCVMGGAYY). Over 852 to 895 (LMSTSEAFDNFCNGRKPQQHTDKRSLEDFLVSMQRVSTQHEKST) the chain is Cytoplasmic.

This sequence belongs to the cation transport ATPase (P-type) (TC 3.A.3) family. Type IIIA subfamily.

It localises to the cell membrane. It carries out the reaction ATP + H2O + H(+)(in) = ADP + phosphate + 2 H(+)(out). In terms of biological role, the plasma membrane ATPase of plants and fungi is a hydrogen ion pump. The proton gradient it generates drives the active transport of nutrients by H(+)-symport. The resulting external acidification and/or internal alkinization may mediate growth responses. This Candida albicans (Yeast) protein is Plasma membrane ATPase 1 (PMA1).